Here is a 222-residue protein sequence, read N- to C-terminus: uncharacterized protein (222 aa).

Belongs to the PhoU family.

Its subcellular location is the cytoplasm. Functionally, not known; probably involved in phosphate transport and/or metabolism. This is an uncharacterized protein from Deinococcus radiodurans (strain ATCC 13939 / DSM 20539 / JCM 16871 / CCUG 27074 / LMG 4051 / NBRC 15346 / NCIMB 9279 / VKM B-1422 / R1).